The following is a 93-amino-acid chain: Large ribosomal subunit protein uL23 (93 aa).

Belongs to the universal ribosomal protein uL23 family. As to quaternary structure, part of the 50S ribosomal subunit. Contacts protein L29, and trigger factor when it is bound to the ribosome.

One of the early assembly proteins it binds 23S rRNA. One of the proteins that surrounds the polypeptide exit tunnel on the outside of the ribosome. Forms the main docking site for trigger factor binding to the ribosome. The polypeptide is Large ribosomal subunit protein uL23 (Helicobacter acinonychis (strain Sheeba)).